A 160-amino-acid chain; its full sequence is Cytochrome b6-f complex subunit 4 (160 aa).

Helical transmembrane passes span 36-56 (LLYM…GLAV), 95-115 (LLGV…PFIE), and 131-151 (TIFL…TLPI).

It belongs to the cytochrome b family. PetD subfamily. The 4 large subunits of the cytochrome b6-f complex are cytochrome b6, subunit IV (17 kDa polypeptide, petD), cytochrome f and the Rieske protein, while the 4 small subunits are petG, petL, petM and petN. The complex functions as a dimer.

It is found in the plastid. Its subcellular location is the chloroplast thylakoid membrane. In terms of biological role, component of the cytochrome b6-f complex, which mediates electron transfer between photosystem II (PSII) and photosystem I (PSI), cyclic electron flow around PSI, and state transitions. This chain is Cytochrome b6-f complex subunit 4, found in Staurastrum punctulatum (Green alga).